The following is a 228-amino-acid chain: Cytidylate kinase (228 aa).

Residue 7-15 (GPVATGKST) participates in ATP binding.

Belongs to the cytidylate kinase family. Type 1 subfamily.

It is found in the cytoplasm. The enzyme catalyses CMP + ATP = CDP + ADP. It catalyses the reaction dCMP + ATP = dCDP + ADP. The protein is Cytidylate kinase of Protochlamydia amoebophila (strain UWE25).